A 297-amino-acid polypeptide reads, in one-letter code: uncharacterized protein (297 aa).

Residues 128–156 (RGVIVEQESEAAAEKDELESLAKVLESDF) adopt a coiled-coil conformation.

This is an uncharacterized protein from Bacillus subtilis (strain 168).